The primary structure comprises 335 residues: Protein PXR1 (335 aa).

The 47-residue stretch at 25–71 (KSRFGHKYLEKLGWEPGKGLGHASHAMSTHIKVTIKDDTMGLGAKLK) folds into the G-patch domain. The interval 155–310 (DDAEDAKVSG…PPTISTRLSV (156 aa)) is disordered. The segment covering 163–175 (SGKHRDRKSRAKR) has biased composition (basic residues). Over residues 183–209 (LKEKCRDIDRTRKSKRKEKEQEKEKNR) the composition is skewed to basic and acidic residues. Over residues 226-257 (KKDKKDKKEKKEKKEKKEKKEKKHKEKSNKRL) the composition is skewed to basic residues.

It belongs to the PINX1 family.

The protein localises to the nucleus. It localises to the nucleolus. Its function is as follows. Involved in rRNA-processing at A0, A1 and A2 sites and negatively regulates telomerase. The polypeptide is Protein PXR1 (PXR1) (Eremothecium gossypii (strain ATCC 10895 / CBS 109.51 / FGSC 9923 / NRRL Y-1056) (Yeast)).